Here is a 154-residue protein sequence, read N- to C-terminus: Large ribosomal subunit protein uL13 (154 aa).

This sequence belongs to the universal ribosomal protein uL13 family. Part of the 50S ribosomal subunit.

Its function is as follows. This protein is one of the early assembly proteins of the 50S ribosomal subunit, although it is not seen to bind rRNA by itself. It is important during the early stages of 50S assembly. This Rhodospirillum centenum (strain ATCC 51521 / SW) protein is Large ribosomal subunit protein uL13.